We begin with the raw amino-acid sequence, 401 residues long: Nodal homolog 3-A (401 aa).

The signal sequence occupies residues 1-18 (MAFLNLFFCLVFISPLMA). Positions 19-274 (MPPVLQGRKS…KVNGFRRLRR (256 aa)) are excised as a propeptide. N-linked (GlcNAc...) asparagine glycosylation is found at Asn-168, Asn-337, Asn-341, and Asn-344. 2 disulfide bridges follow: Cys-299–Cys-365 and Cys-328–Cys-396.

It belongs to the TGF-beta family. Monomer. The propeptide region interacts with bmp4 in a non-covalent manner. Expressed in the epithelial layer of the Spemann organizer during gastrulation.

It localises to the secreted. Functionally, exhibits mesoderm-dorsalizing activity and neural-inducing activity, but lacks mesoderm-inducing activity. Regulates the expression of specific mesodermal and neural genes. Induces convergent extension movements at the embryonic midline by activating the fgf signaling pathway to induce t/bra expression in the organizer region. Acts with wnt11 to induce Spemann organizer cells and induce axis formation. The unprocessed protein antagonizes bmp-signaling. The sequence is that of Nodal homolog 3-A (nodal3-a) from Xenopus laevis (African clawed frog).